The sequence spans 54 residues: Putative collagen-like domain-containing protein 065L (54 aa).

The segment at 1 to 54 (MRGLEAPGAVGPTGPSGAPGSQGPDGDVGGMGPEGPKGDDGPVGPKGPQGAAIF) is disordered. Positions 7 to 51 (PGAVGPTGPSGAPGSQGPDGDVGGMGPEGPKGDDGPVGPKGPQGA) constitute a Collagen-like domain. The segment covering 26-35 (GDVGGMGPEG) has biased composition (gly residues). A compositionally biased stretch (low complexity) spans 42–54 (PVGPKGPQGAAIF).

The protein is Putative collagen-like domain-containing protein 065L of Dryophytes versicolor (chameleon treefrog).